Consider the following 837-residue polypeptide: Ribosome-releasing factor 2, mitochondrial (837 aa).

The transit peptide at 1-29 (MFSINARTKVPIWVPFIARKGFSMSTRQL) directs the protein to the mitochondrion. The 292-residue stretch at 40–331 (LNTRNIGIIA…GVVDYLPSPL (292 aa)) folds into the tr-type G domain. Residues 49-56 (AHIDAGKT), 113-117 (DTPGH), and 167-170 (NKMD) each bind GTP. The segment at 338–359 (ITASTSKVSKKQKQKKNSKVSS) is disordered. Residues 345-355 (VSKKQKQKKNS) show a composition bias toward basic residues.

The protein belongs to the TRAFAC class translation factor GTPase superfamily. Classic translation factor GTPase family. EF-G/EF-2 subfamily.

It localises to the mitochondrion. Functionally, mitochondrial GTPase that mediates the disassembly of ribosomes from messenger RNA at the termination of mitochondrial protein biosynthesis. Not involved in the GTP-dependent ribosomal translocation step during translation elongation. The polypeptide is Ribosome-releasing factor 2, mitochondrial (Meyerozyma guilliermondii (strain ATCC 6260 / CBS 566 / DSM 6381 / JCM 1539 / NBRC 10279 / NRRL Y-324) (Yeast)).